A 227-amino-acid polypeptide reads, in one-letter code: Cytochrome c oxidase subunit 2 (227 aa).

Residues 1–14 (MAYPFQLGLQDATS) lie on the Mitochondrial intermembrane side of the membrane. A helical membrane pass occupies residues 15 to 45 (PIMEELLHFHDHTLMIVFLISSLVLYIISLM). Residues 46 to 59 (LTTKLTHTSTMDAQ) are Mitochondrial matrix-facing. A helical membrane pass occupies residues 60–87 (EVETVWTILPAIILVLIALPSLRILYMM). Residues 88 to 227 (DEINNPSLTV…YFETWSALMV (140 aa)) are Mitochondrial intermembrane-facing. Positions 161, 196, 198, 200, 204, and 207 each coordinate Cu cation. Glu198 serves as a coordination point for Mg(2+). A Phosphotyrosine modification is found at Tyr218.

The protein belongs to the cytochrome c oxidase subunit 2 family. Component of the cytochrome c oxidase (complex IV, CIV), a multisubunit enzyme composed of 14 subunits. The complex is composed of a catalytic core of 3 subunits MT-CO1, MT-CO2 and MT-CO3, encoded in the mitochondrial DNA, and 11 supernumerary subunits COX4I, COX5A, COX5B, COX6A, COX6B, COX6C, COX7A, COX7B, COX7C, COX8 and NDUFA4, which are encoded in the nuclear genome. The complex exists as a monomer or a dimer and forms supercomplexes (SCs) in the inner mitochondrial membrane with NADH-ubiquinone oxidoreductase (complex I, CI) and ubiquinol-cytochrome c oxidoreductase (cytochrome b-c1 complex, complex III, CIII), resulting in different assemblies (supercomplex SCI(1)III(2)IV(1) and megacomplex MCI(2)III(2)IV(2)). Found in a complex with TMEM177, COA6, COX18, COX20, SCO1 and SCO2. Interacts with TMEM177 in a COX20-dependent manner. Interacts with COX20. Interacts with COX16. It depends on Cu cation as a cofactor.

It is found in the mitochondrion inner membrane. It carries out the reaction 4 Fe(II)-[cytochrome c] + O2 + 8 H(+)(in) = 4 Fe(III)-[cytochrome c] + 2 H2O + 4 H(+)(out). Its function is as follows. Component of the cytochrome c oxidase, the last enzyme in the mitochondrial electron transport chain which drives oxidative phosphorylation. The respiratory chain contains 3 multisubunit complexes succinate dehydrogenase (complex II, CII), ubiquinol-cytochrome c oxidoreductase (cytochrome b-c1 complex, complex III, CIII) and cytochrome c oxidase (complex IV, CIV), that cooperate to transfer electrons derived from NADH and succinate to molecular oxygen, creating an electrochemical gradient over the inner membrane that drives transmembrane transport and the ATP synthase. Cytochrome c oxidase is the component of the respiratory chain that catalyzes the reduction of oxygen to water. Electrons originating from reduced cytochrome c in the intermembrane space (IMS) are transferred via the dinuclear copper A center (CU(A)) of subunit 2 and heme A of subunit 1 to the active site in subunit 1, a binuclear center (BNC) formed by heme A3 and copper B (CU(B)). The BNC reduces molecular oxygen to 2 water molecules using 4 electrons from cytochrome c in the IMS and 4 protons from the mitochondrial matrix. The sequence is that of Cytochrome c oxidase subunit 2 (MT-CO2) from Cerdocyon thous (Crab-eating fox).